Reading from the N-terminus, the 376-residue chain is MATLFTVARPSSLLYVSSINPSKTFSPSISLKLNSLSFSFGYRPKPLRFSKIRSSLPSESESESDLDASAVTDEWGEKPGDANEPDSQPDNVTVNVITDEWGEKSGPELEESGTRFMESDPPRNEDEWGGEIGGETEADAGNGSAVSDPTWELKRCLADSVYGTELGFKAGSEVRAEVLELVNQLEALNPTPAPLENPELLDGNWVLLYTAFSELIPLLAAGSTPLLKVKSISQSIDTNNLIIDNSTTLSSPFADFSFSATASFEVRSPSRIEVSFKEGTLKPPVIKSSVDLPESVGVFGQQISLSLLKQSLNPLQDVAANISRALSGQPPLKLPFPGNRGSSWLLTTYLDKDLRISRGDGGLFVLAREGSSLLEL.

Residues 1-53 constitute a chloroplast transit peptide; sequence MATLFTVARPSSLLYVSSINPSKTFSPSISLKLNSLSFSFGYRPKPLRFSKIR. The disordered stretch occupies residues 54–146; that stretch reads SSLPSESESE…EADAGNGSAV (93 aa). The span at 85 to 96 shows a compositional bias: polar residues; the sequence is PDSQPDNVTVNV. Residues 117 to 126 are compositionally biased toward basic and acidic residues; the sequence is MESDPPRNED.

It belongs to the PAP/fibrillin family.

It localises to the plastid. It is found in the chloroplast. Its subcellular location is the plastoglobule. In terms of biological role, probably involved in light/cold stress-related jasmonate (JA) biosynthesis. This Arabidopsis thaliana (Mouse-ear cress) protein is Probable plastid-lipid-associated protein 3, chloroplastic (PAP3).